The sequence spans 351 residues: MLKNDLFLRALKRQPCSRTPIWVMRQAGRYLPEYRAVREKTDFLTLCKTPELAAEVTIQPVDLMGVDAAIIFSDILVINEAMGMNVEIIETKGIKLSPVIRSKADIDKLIVPDIDEKLGYVMDALRLTKKELDNRVPLIGFSGAAWTLFTYAVEGGGSKNYAFAKKMMYREPQMAHLLLGKISETISAYLLKQVEAGADAIQIFDSWASALSEDDYREFALPYIKQNVQAVKAKYPDIPVIVFSKDCNTILSDIADTGCDAMGLGWGIDIAKARAELKDRVALQGNLDPTVLYGTPEKIKSEAAKVLKQFGQHTESSGHVFNLGHGILPDVDPANLKLLVEFVKEESARYH.

Substrate is bound by residues 25–29 (RQAGR), aspartate 74, tyrosine 151, serine 206, and histidine 325.

It belongs to the uroporphyrinogen decarboxylase family. In terms of assembly, homodimer.

Its subcellular location is the cytoplasm. It carries out the reaction uroporphyrinogen III + 4 H(+) = coproporphyrinogen III + 4 CO2. It functions in the pathway porphyrin-containing compound metabolism; protoporphyrin-IX biosynthesis; coproporphyrinogen-III from 5-aminolevulinate: step 4/4. Its function is as follows. Catalyzes the decarboxylation of four acetate groups of uroporphyrinogen-III to yield coproporphyrinogen-III. This is Uroporphyrinogen decarboxylase from Chlorobium limicola (strain DSM 245 / NBRC 103803 / 6330).